The chain runs to 185 residues: Ribosome-recycling factor (185 aa).

Belongs to the RRF family.

The protein resides in the cytoplasm. Responsible for the release of ribosomes from messenger RNA at the termination of protein biosynthesis. May increase the efficiency of translation by recycling ribosomes from one round of translation to another. The polypeptide is Ribosome-recycling factor (Bacillus anthracis (strain CDC 684 / NRRL 3495)).